The chain runs to 309 residues: Homoserine kinase (309 aa).

95-105 contributes to the ATP binding site; sequence PQSRGLGSSAA.

It belongs to the GHMP kinase family. Homoserine kinase subfamily.

Its subcellular location is the cytoplasm. It carries out the reaction L-homoserine + ATP = O-phospho-L-homoserine + ADP + H(+). Its pathway is amino-acid biosynthesis; L-threonine biosynthesis; L-threonine from L-aspartate: step 4/5. Its function is as follows. Catalyzes the ATP-dependent phosphorylation of L-homoserine to L-homoserine phosphate. The polypeptide is Homoserine kinase (Corynebacterium glutamicum (strain R)).